Consider the following 267-residue polypeptide: Tryptophan synthase alpha chain (267 aa).

Catalysis depends on proton acceptor residues Glu49 and Asp60.

Belongs to the TrpA family. Tetramer of two alpha and two beta chains.

It catalyses the reaction (1S,2R)-1-C-(indol-3-yl)glycerol 3-phosphate + L-serine = D-glyceraldehyde 3-phosphate + L-tryptophan + H2O. The protein operates within amino-acid biosynthesis; L-tryptophan biosynthesis; L-tryptophan from chorismate: step 5/5. The alpha subunit is responsible for the aldol cleavage of indoleglycerol phosphate to indole and glyceraldehyde 3-phosphate. This is Tryptophan synthase alpha chain from Rippkaea orientalis (strain PCC 8801 / RF-1) (Cyanothece sp. (strain PCC 8801)).